The primary structure comprises 557 residues: Anti-Muellerian hormone type-2 receptor (557 aa).

An N-terminal signal peptide occupies residues 1–17 (MLGTLGLWTLLPAAAQV). The Extracellular portion of the chain corresponds to 18–144 (SPNRRTCVFF…QEPQATPGGP (127 aa)). 2 disulfides stabilise this stretch: Cys55/Cys79 and Cys92/Cys109. N-linked (GlcNAc...) asparagine glycosylation occurs at Asn66. A glycan (N-linked (GlcNAc...) asparagine) is linked at Asn119. A helical membrane pass occupies residues 145–165 (IWMAQLLLGVFLVLLLSIIIL). Residues 166–557 (ALLQRKACRV…SVQQGSGSKS (392 aa)) lie on the Cytoplasmic side of the membrane. One can recognise a Protein kinase domain in the interval 201-511 (LRFSQVIQEG…RLAALAYPQV (311 aa)). Residues 207–215 (IQEGGHAVV) and Lys228 contribute to the ATP site. Asp331 functions as the Proton acceptor in the catalytic mechanism.

Belongs to the protein kinase superfamily. TKL Ser/Thr protein kinase family. TGFB receptor subfamily. As to quaternary structure, interacts with type I receptor ACVR1. The cofactor is Mg(2+). Mn(2+) serves as cofactor.

It is found in the membrane. It catalyses the reaction L-threonyl-[receptor-protein] + ATP = O-phospho-L-threonyl-[receptor-protein] + ADP + H(+). The catalysed reaction is L-seryl-[receptor-protein] + ATP = O-phospho-L-seryl-[receptor-protein] + ADP + H(+). In terms of biological role, on ligand binding, forms a receptor complex consisting of two type II and two type I transmembrane serine/threonine kinases. Type II receptors phosphorylate and activate type I receptors which autophosphorylate, then bind and activate SMAD transcriptional regulators. Receptor for anti-Muellerian hormone. This Rattus norvegicus (Rat) protein is Anti-Muellerian hormone type-2 receptor (Amhr2).